We begin with the raw amino-acid sequence, 401 residues long: Phosphoglycerate kinase (401 aa).

Substrate is bound by residues 21-23 (DFN), arginine 36, 59-62 (HLGR), arginine 119, and arginine 160. ATP contacts are provided by residues lysine 212, glutamate 330, and 357–360 (GGDS).

Belongs to the phosphoglycerate kinase family. In terms of assembly, monomer.

The protein localises to the cytoplasm. The enzyme catalyses (2R)-3-phosphoglycerate + ATP = (2R)-3-phospho-glyceroyl phosphate + ADP. It participates in carbohydrate degradation; glycolysis; pyruvate from D-glyceraldehyde 3-phosphate: step 2/5. This chain is Phosphoglycerate kinase, found in Limosilactobacillus fermentum (strain NBRC 3956 / LMG 18251) (Lactobacillus fermentum).